The following is a 243-amino-acid chain: Triosephosphate isomerase (243 aa).

A substrate-binding site is contributed by 9-11; the sequence is NWK. H96 serves as the catalytic Electrophile. The Proton acceptor role is filled by E165. Residues G171, S204, and 225-226 each bind substrate; that span reads GG.

The protein belongs to the triosephosphate isomerase family. Homodimer.

Its subcellular location is the cytoplasm. It carries out the reaction D-glyceraldehyde 3-phosphate = dihydroxyacetone phosphate. It participates in carbohydrate biosynthesis; gluconeogenesis. Its pathway is carbohydrate degradation; glycolysis; D-glyceraldehyde 3-phosphate from glycerone phosphate: step 1/1. In terms of biological role, involved in the gluconeogenesis. Catalyzes stereospecifically the conversion of dihydroxyacetone phosphate (DHAP) to D-glyceraldehyde-3-phosphate (G3P). This Nostoc punctiforme (strain ATCC 29133 / PCC 73102) protein is Triosephosphate isomerase.